A 1131-amino-acid polypeptide reads, in one-letter code: DNA polymerase II large subunit (1131 aa).

It belongs to the archaeal DNA polymerase II family. Heterodimer of a large subunit and a small subunit.

The catalysed reaction is DNA(n) + a 2'-deoxyribonucleoside 5'-triphosphate = DNA(n+1) + diphosphate. The enzyme catalyses Exonucleolytic cleavage in the 3'- to 5'-direction to yield nucleoside 5'-phosphates.. Possesses two activities: a DNA synthesis (polymerase) and an exonucleolytic activity that degrades single-stranded DNA in the 3'- to 5'-direction. Has a template-primer preference which is characteristic of a replicative DNA polymerase. This chain is DNA polymerase II large subunit, found in Methanococcus vannielii (strain ATCC 35089 / DSM 1224 / JCM 13029 / OCM 148 / SB).